We begin with the raw amino-acid sequence, 507 residues long: Probable cyclic di-GMP phosphodiesterase PdeG (507 aa).

2 consecutive transmembrane segments (helical) span residues 4 to 24 and 217 to 237; these read TLIPILVAICLFITGVAILNI and LIDKGFGILIFILLIACAAAF. The EAL domain maps to 246 to 500; sequence SATPEEILRR…DLVKIILSKP (255 aa).

It is found in the cell membrane. It carries out the reaction 3',3'-c-di-GMP + H2O = 5'-phosphoguanylyl(3'-&gt;5')guanosine + H(+). Its function is as follows. Phosphodiesterase (PDE) that catalyzes the hydrolysis of cyclic-di-GMP (c-di-GMP) to 5'-pGpG. The sequence is that of Probable cyclic di-GMP phosphodiesterase PdeG from Escherichia coli (strain K12).